The primary structure comprises 614 residues: Chaperone protein DnaK (614 aa).

Residue Thr176 is modified to Phosphothreonine; by autocatalysis. The disordered stretch occupies residues 576–614; sequence YQQQQSQGGEAGAANGDASKKDDNTVDGDFHEVHDDDKK. The span at 577-589 shows a compositional bias: low complexity; that stretch reads QQQQSQGGEAGAA. Basic and acidic residues predominate over residues 593-614; the sequence is ASKKDDNTVDGDFHEVHDDDKK.

The protein belongs to the heat shock protein 70 family.

Acts as a chaperone. The protein is Chaperone protein DnaK of Fructilactobacillus sanfranciscensis (Lactobacillus sanfranciscensis).